Here is a 1167-residue protein sequence, read N- to C-terminus: Integrin alpha-10 (1167 aa).

A signal peptide spans 1-22; sequence MELPFVTHLFLPLVFLTGLCSP. Residues 23–1122 are Extracellular-facing; sequence FNLDEHHPRL…VVQTRPILIS (1100 aa). FG-GAP repeat units lie at residues 24–85 and 95–154; these read NLDE…HNAP and QLGN…PQGS. A disulfide bridge connects residues Cys-76 and Cys-86. N-linked (GlcNAc...) asparagine glycosylation is found at Asn-98, Asn-234, Asn-336, and Asn-364. In terms of domain architecture, VWFA spans 167–350; sequence DVVIVLDGSN…AALTDIVDAL (184 aa). FG-GAP repeat units follow at residues 361–412, 417–470, 472–534, 535–593, and 597–657; these read HAEN…LFPP, EDEF…KDGA, RVAQ…SLLT, LQGT…GVRP, and QRIA…VTPQ. Asp-494, Asp-496, Asp-498, Asp-502, Asp-558, Asn-560, Asp-562, Asp-566, Asp-620, Asp-622, Asp-624, and Asp-628 together coordinate Ca(2+). 2 cysteine pairs are disulfide-bonded: Cys-666-Cys-675 and Cys-681-Cys-736. Residues Asn-733 and Asn-763 are each glycosylated (N-linked (GlcNAc...) asparagine). An intrachain disulfide couples Cys-789 to Cys-795. N-linked (GlcNAc...) asparagine glycans are attached at residues Asn-839, Asn-921, Asn-1011, Asn-1018, and Asn-1039. A helical transmembrane segment spans residues 1123-1145; that stretch reads LWILIGSVLGGLLLLALLVFCLW. Residues 1146-1167 are Cytoplasmic-facing; that stretch reads KLGFFAHKKIPEEEKREEKLEQ.

This sequence belongs to the integrin alpha chain family. As to quaternary structure, heterodimer of an alpha and a beta subunit. Alpha-10 associates with beta-1. In terms of tissue distribution, widely expressed with highest expression in muscle and heart. Found in articular cartilage.

The protein localises to the membrane. Functionally, integrin alpha-10/beta-1 is a receptor for collagen. This Homo sapiens (Human) protein is Integrin alpha-10 (ITGA10).